The chain runs to 824 residues: Molybdenum cofactor sulfurase (824 aa).

K274 is modified (N6-(pyridoxal phosphate)lysine). Residue C433 is part of the active site. In terms of domain architecture, MOSC spans 655–822; sequence CSSSKYRSCT…LQVGQQVYPS (168 aa).

It belongs to the class-V pyridoxal-phosphate-dependent aminotransferase family. MOCOS subfamily. Pyridoxal 5'-phosphate serves as cofactor.

The catalysed reaction is Mo-molybdopterin + L-cysteine + AH2 = thio-Mo-molybdopterin + L-alanine + A + H2O. It functions in the pathway cofactor biosynthesis; molybdopterin biosynthesis. Sulfurates the molybdenum cofactor. Sulfation of molybdenum is essential for xanthine dehydrogenase (XDH) and aldehyde oxidase (ADO) enzymes in which molybdenum cofactor is liganded by 1 oxygen and 1 sulfur atom in active form. The chain is Molybdenum cofactor sulfurase (MCSU3) from Oryza sativa subsp. japonica (Rice).